The sequence spans 472 residues: Envelope glycoprotein O (472 aa).

A signal peptide spans 1–31 (MGKKEMIMVKGIPKIMLLISITFLLLSLINC). Residues asparagine 109, asparagine 136, asparagine 163, asparagine 168, asparagine 177, asparagine 225, asparagine 248, asparagine 294, asparagine 298, asparagine 356, asparagine 391, asparagine 398, asparagine 405, asparagine 439, and asparagine 460 are each glycosylated (N-linked (GlcNAc...) asparagine; by host).

This sequence belongs to the herpesviridae U47 family. Forms the envelope trimer complex composed of gH, gL, and gO. The trimer interacts with host PDGFRA. N-glycosylated. In terms of processing, the N-terminus is blocked.

It localises to the virion membrane. Its function is as follows. Plays a role in viral entry into host cells. Forms a trimeric complex at the surface of the viral envelope together with gH and gL. This complex is required for entry in host fibroblasts. Mechanistically, engages host receptor(s) including PDGFRA to mediate infection. This chain is Envelope glycoprotein O (UL74), found in Human cytomegalovirus (strain Merlin) (HHV-5).